The sequence spans 109 residues: MKDLGGLMKQAQAMQQKLADAQARLAETTVDGTSGGGMVTVTLMGNGELVRVLMDESLVQPGEGEVIADLIIAAHADAKKKLDAKQAQMMQDAAGPMAGLMGGLPGMKF.

Belongs to the YbaB/EbfC family. As to quaternary structure, homodimer.

The protein resides in the cytoplasm. It is found in the nucleoid. Functionally, binds to DNA and alters its conformation. May be involved in regulation of gene expression, nucleoid organization and DNA protection. This chain is Nucleoid-associated protein CC_0268, found in Caulobacter vibrioides (strain ATCC 19089 / CIP 103742 / CB 15) (Caulobacter crescentus).